Reading from the N-terminus, the 295-residue chain is Ribosomal RNA small subunit methyltransferase A (295 aa).

Positions 31, 33, 58, 79, 104, and 129 each coordinate S-adenosyl-L-methionine.

The protein belongs to the class I-like SAM-binding methyltransferase superfamily. rRNA adenine N(6)-methyltransferase family. RsmA subfamily.

Its subcellular location is the cytoplasm. The enzyme catalyses adenosine(1518)/adenosine(1519) in 16S rRNA + 4 S-adenosyl-L-methionine = N(6)-dimethyladenosine(1518)/N(6)-dimethyladenosine(1519) in 16S rRNA + 4 S-adenosyl-L-homocysteine + 4 H(+). Its function is as follows. Specifically dimethylates two adjacent adenosines (A1518 and A1519) in the loop of a conserved hairpin near the 3'-end of 16S rRNA in the 30S particle. May play a critical role in biogenesis of 30S subunits. This Enterococcus faecalis (strain ATCC 700802 / V583) protein is Ribosomal RNA small subunit methyltransferase A.